Reading from the N-terminus, the 168-residue chain is Photosystem I assembly protein Ycf3 (168 aa).

TPR repeat units follow at residues 35-68, 72-105, and 120-153; these read AFTY…EIDP, SYIL…NPFL, and GEQA…TPGN.

This sequence belongs to the Ycf3 family.

The protein localises to the plastid. It localises to the chloroplast thylakoid membrane. Essential for the assembly of the photosystem I (PSI) complex. May act as a chaperone-like factor to guide the assembly of the PSI subunits. This chain is Photosystem I assembly protein Ycf3, found in Calycanthus floridus var. glaucus (Eastern sweetshrub).